A 283-amino-acid polypeptide reads, in one-letter code: Protein BASIC PENTACYSTEINE5 (283 aa).

Residues 51–86 form an alanine-zipper region; that stretch reads AVKERNEAVAATKEALASRDEALEQRDKALSERDNA. Residues 63–89 are a coiled coil; the sequence is KEALASRDEALEQRDKALSERDNAIME. Residues 122–176 form a disordered region; that stretch reads EESHLPNPSPISTIPPEAANTRPTKRKKESKQGKKMGEDLNRPVASPGKKSRKDW. Residues 151–162 are compositionally biased toward basic and acidic residues; it reads SKQGKKMGEDLN.

This sequence belongs to the BBR/BPC family. Homodimer. Heterodimer. Expressed in seedlings, leaves and pistils.

The protein localises to the nucleus. Its function is as follows. Transcriptional regulator that specifically binds to GA-rich elements (GAGA-repeats) present in regulatory sequences of genes involved in developmental processes. The sequence is that of Protein BASIC PENTACYSTEINE5 (BPC5) from Arabidopsis thaliana (Mouse-ear cress).